The sequence spans 428 residues: Dihydroorotase (428 aa).

Residues histidine 59 and histidine 61 each coordinate Zn(2+). Substrate-binding positions include histidine 61–arginine 63 and asparagine 93. Positions 151, 178, and 231 each coordinate Zn(2+). Residue asparagine 277 participates in substrate binding. Aspartate 304 is a Zn(2+) binding site. Aspartate 304 is a catalytic residue. Substrate contacts are provided by residues histidine 308 and phenylalanine 322–glycine 323.

It belongs to the metallo-dependent hydrolases superfamily. DHOase family. Class I DHOase subfamily. It depends on Zn(2+) as a cofactor.

It catalyses the reaction (S)-dihydroorotate + H2O = N-carbamoyl-L-aspartate + H(+). Its pathway is pyrimidine metabolism; UMP biosynthesis via de novo pathway; (S)-dihydroorotate from bicarbonate: step 3/3. Functionally, catalyzes the reversible cyclization of carbamoyl aspartate to dihydroorotate. This Bacillus cereus (strain ZK / E33L) protein is Dihydroorotase.